Reading from the N-terminus, the 130-residue chain is Flagellar assembly factor FliW (130 aa).

The protein belongs to the FliW family. Interacts with translational regulator CsrA and flagellin(s).

It is found in the cytoplasm. Its function is as follows. Acts as an anti-CsrA protein, binds CsrA and prevents it from repressing translation of its target genes, one of which is flagellin. Binds to flagellin and participates in the assembly of the flagellum. This chain is Flagellar assembly factor FliW, found in Borrelia hermsii (strain HS1 / DAH).